The chain runs to 133 residues: Probable 4-amino-4-deoxy-L-arabinose-phosphoundecaprenol flippase subunit ArnF (133 aa).

Residues 1 to 5 are Cytoplasmic-facing; the sequence is MKTGY. Residues 6 to 26 traverse the membrane as a helical segment; the sequence is LWAIASALLVTVAQLLLKIGM. The Periplasmic portion of the chain corresponds to 27-47; the sequence is SELPDLQLEKQWFDLHWLWAN. The chain crosses the membrane as a helical span at residues 48–68; the sequence is IIPISVVFVGLIGYVLSMVCW. The region spanning 51–125 is the EamA domain; that stretch reads ISVVFVGLIG…IMLGVWLISQ (75 aa). The Cytoplasmic segment spans residues 69-80; sequence LLTLRTIPLNKA. A helical transmembrane segment spans residues 81-101; sequence YPLISLSYVFVYILAVVLPWF. The Periplasmic portion of the chain corresponds to 102-103; that stretch reads QE. A helical transmembrane segment spans residues 104 to 124; sequence TLSWSKTIGIIFIMLGVWLIS. Topologically, residues 125 to 133 are cytoplasmic; sequence QKTEQTTSH.

It belongs to the ArnF family. As to quaternary structure, heterodimer of ArnE and ArnF.

The protein resides in the cell inner membrane. Its pathway is bacterial outer membrane biogenesis; lipopolysaccharide biosynthesis. Its function is as follows. Translocates 4-amino-4-deoxy-L-arabinose-phosphoundecaprenol (alpha-L-Ara4N-phosphoundecaprenol) from the cytoplasmic to the periplasmic side of the inner membrane. This is Probable 4-amino-4-deoxy-L-arabinose-phosphoundecaprenol flippase subunit ArnF from Proteus mirabilis (strain HI4320).